A 561-amino-acid chain; its full sequence is MRTSQYYLATLKDSPSETEGISHRLMIRSGMIRKLSSGLYAWLPTGFRVLKKIENIIRHEMNKIGAIEILMPIIQPSLIWKNSGRYEEYGLELLKFYDRKKKQFVLAPTHEEVISKIILKEINFNKVFPINFYQIYSKFRDEARPRCGTMRSKEFVMKDSYSFHLNEKSLEKTYHIMQETYKKIFNRLNLDYFVIRAKTGKIGGFISHEFHAYYNKSDVLINSYKKIFDKNNIINKFKKKIEIKNLIEINAEDILLTSDLAKKFNIDIKQIIKILLVHSIEKNHPFIAIAIREDHEIDLQKVENLNQVKKPLKFANYYEINKYFKVKKSYLGPVNIKCLLIVDKEAHCIKNFVSGANINNKYFFNINWDRDVVSYLVYDLKLCRKKYNNKKNNNSIEIGHIFQLGDKYSKPLNYSLLKDYNKKKIFMGCYGIGISRLVSTYIEQNYDSNGIIWNEEIAPFKVAIIPININFSIKVKNFSEEIYYKLCNLKIDVLFYDNVERPGIMFSNIELIGIPHILIISDKNLKNSIIEYKNRITGDKLMINYKYIFDFLLQFNINFNF.

Belongs to the class-II aminoacyl-tRNA synthetase family. ProS type 1 subfamily. Homodimer.

It is found in the cytoplasm. It catalyses the reaction tRNA(Pro) + L-proline + ATP = L-prolyl-tRNA(Pro) + AMP + diphosphate. Its function is as follows. Catalyzes the attachment of proline to tRNA(Pro) in a two-step reaction: proline is first activated by ATP to form Pro-AMP and then transferred to the acceptor end of tRNA(Pro). As ProRS can inadvertently accommodate and process non-cognate amino acids such as alanine and cysteine, to avoid such errors it has two additional distinct editing activities against alanine. One activity is designated as 'pretransfer' editing and involves the tRNA(Pro)-independent hydrolysis of activated Ala-AMP. The other activity is designated 'posttransfer' editing and involves deacylation of mischarged Ala-tRNA(Pro). The misacylated Cys-tRNA(Pro) is not edited by ProRS. This chain is Proline--tRNA ligase, found in Wigglesworthia glossinidia brevipalpis.